The sequence spans 202 residues: 3-isopropylmalate dehydratase small subunit (202 aa).

The protein belongs to the LeuD family. LeuD type 1 subfamily. Heterodimer of LeuC and LeuD.

The enzyme catalyses (2R,3S)-3-isopropylmalate = (2S)-2-isopropylmalate. It participates in amino-acid biosynthesis; L-leucine biosynthesis; L-leucine from 3-methyl-2-oxobutanoate: step 2/4. Functionally, catalyzes the isomerization between 2-isopropylmalate and 3-isopropylmalate, via the formation of 2-isopropylmaleate. This is 3-isopropylmalate dehydratase small subunit from Nocardioides sp. (strain ATCC BAA-499 / JS614).